A 232-amino-acid chain; its full sequence is Dephospho-CoA kinase (232 aa).

The DPCK domain maps to 3 to 206; sequence IVGLTGGIAS…RPLTWIEFWR (204 aa). Residue 8-15 coordinates ATP; it reads GGIASGKS.

The protein belongs to the CoaE family.

The protein resides in the peroxisome. It carries out the reaction 3'-dephospho-CoA + ATP = ADP + CoA + H(+). It functions in the pathway cofactor biosynthesis; coenzyme A biosynthesis; CoA from (R)-pantothenate: step 5/5. Its function is as follows. Catalyzes the phosphorylation of the 3'-hydroxyl group of dephosphocoenzyme A to form coenzyme A. The polypeptide is Dephospho-CoA kinase (Arabidopsis thaliana (Mouse-ear cress)).